A 717-amino-acid chain; its full sequence is Copine family protein 5 (717 aa).

Residues 193-318 enclose the C2 domain; that stretch reads YLGGIIVSAE…KYGPGSDNVY (126 aa). The 191-residue stretch at 377 to 567 folds into the VWFA domain; that stretch reads ELDQRRFDGE…LNKSRIAETA (191 aa).

Belongs to the copine family.

This is Copine family protein 5 (cpna-5) from Caenorhabditis elegans.